The chain runs to 193 residues: Thioredoxin peroxidase (193 aa).

The Thioredoxin domain maps to 3–161 (AVVGKLAPSF…ALRLLDAFQF (159 aa)). The active-site Cysteine sulfenic acid (-SOH) intermediate is Cys-48.

Belongs to the peroxiredoxin family. AhpC/Prx1 subfamily. In terms of assembly, homodimer; disulfide-linked, upon oxidation.

The catalysed reaction is a hydroperoxide + [thioredoxin]-dithiol = an alcohol + [thioredoxin]-disulfide + H2O. Its function is as follows. Thiol-specific peroxidase that catalyzes the reduction of hydrogen peroxide and organic hydroperoxides to water and alcohols, respectively. Plays a role in cell protection against oxidative stress by detoxifying peroxides and as sensor of hydrogen peroxide-mediated signaling events. This chain is Thioredoxin peroxidase (TPX), found in Echinococcus granulosus (Hydatid tapeworm).